The chain runs to 312 residues: Glutathione synthetase (312 aa).

In terms of domain architecture, ATP-grasp spans 125 to 309 (KIFVTEFPDL…IAALFWDAVE (185 aa)). An ATP-binding site is contributed by 151 to 207 (RREFGDIILKPLYGNGGAGVFHLADGDRNLTSLLEMFGQLFREPFIAQRYLKDVRAG). Residues E280 and N282 each coordinate Mg(2+).

It belongs to the prokaryotic GSH synthase family. The cofactor is Mg(2+). It depends on Mn(2+) as a cofactor.

The enzyme catalyses gamma-L-glutamyl-L-cysteine + glycine + ATP = glutathione + ADP + phosphate + H(+). It participates in sulfur metabolism; glutathione biosynthesis; glutathione from L-cysteine and L-glutamate: step 2/2. The chain is Glutathione synthetase from Brucella melitensis biotype 1 (strain ATCC 23456 / CCUG 17765 / NCTC 10094 / 16M).